A 304-amino-acid polypeptide reads, in one-letter code: Voltage-dependent anion channel-forming protein YneE (304 aa).

Transmembrane regions (helical) follow at residues 28–48 (LLLN…YTHL), 50–70 (IKFT…FLGF), 194–214 (VLAG…TLIL), and 220–240 (LFCI…TPFI).

Belongs to the anion channel-forming bestrophin (TC 1.A.46) family.

It localises to the cell membrane. In Escherichia coli (strain K12), this protein is Voltage-dependent anion channel-forming protein YneE (yneE).